The primary structure comprises 233 residues: Phosphonates import ATP-binding protein PhnC 1 (233 aa).

The ABC transporter domain occupies Leu2–Ile227. Residue Gly34–Thr41 participates in ATP binding.

This sequence belongs to the ABC transporter superfamily. Phosphonates importer (TC 3.A.1.9.1) family. The complex is composed of two ATP-binding proteins (PhnC), two transmembrane proteins (PhnE) and a solute-binding protein (PhnD).

The protein resides in the cell membrane. The catalysed reaction is phosphonate(out) + ATP + H2O = phosphonate(in) + ADP + phosphate + H(+). Functionally, part of the ABC transporter complex PhnCDE involved in phosphonates import. Responsible for energy coupling to the transport system. The polypeptide is Phosphonates import ATP-binding protein PhnC 1 (Natronomonas pharaonis (strain ATCC 35678 / DSM 2160 / CIP 103997 / JCM 8858 / NBRC 14720 / NCIMB 2260 / Gabara) (Halobacterium pharaonis)).